The chain runs to 355 residues: UDP-N-acetylglucosamine--N-acetylmuramyl-(pentapeptide) pyrophosphoryl-undecaprenol N-acetylglucosamine transferase (355 aa).

UDP-N-acetyl-alpha-D-glucosamine contacts are provided by residues 13 to 15 (TGG), asparagine 125, arginine 162, serine 190, isoleucine 244, and glutamine 289.

It belongs to the glycosyltransferase 28 family. MurG subfamily.

The protein resides in the cell inner membrane. It carries out the reaction di-trans,octa-cis-undecaprenyl diphospho-N-acetyl-alpha-D-muramoyl-L-alanyl-D-glutamyl-meso-2,6-diaminopimeloyl-D-alanyl-D-alanine + UDP-N-acetyl-alpha-D-glucosamine = di-trans,octa-cis-undecaprenyl diphospho-[N-acetyl-alpha-D-glucosaminyl-(1-&gt;4)]-N-acetyl-alpha-D-muramoyl-L-alanyl-D-glutamyl-meso-2,6-diaminopimeloyl-D-alanyl-D-alanine + UDP + H(+). It functions in the pathway cell wall biogenesis; peptidoglycan biosynthesis. Functionally, cell wall formation. Catalyzes the transfer of a GlcNAc subunit on undecaprenyl-pyrophosphoryl-MurNAc-pentapeptide (lipid intermediate I) to form undecaprenyl-pyrophosphoryl-MurNAc-(pentapeptide)GlcNAc (lipid intermediate II). The chain is UDP-N-acetylglucosamine--N-acetylmuramyl-(pentapeptide) pyrophosphoryl-undecaprenol N-acetylglucosamine transferase from Neisseria gonorrhoeae (strain ATCC 700825 / FA 1090).